A 429-amino-acid chain; its full sequence is Adenylosuccinate synthetase (429 aa).

Residues 12–18 (GDEGKGK) and 40–42 (GHT) each bind GTP. The active-site Proton acceptor is Asp-13. Residues Asp-13 and Gly-40 each coordinate Mg(2+). IMP contacts are provided by residues 13-16 (DEGK), 38-41 (NAGH), Thr-128, Arg-142, Gln-223, Thr-238, and Arg-302. His-41 acts as the Proton donor in catalysis. Residue 298-304 (ATTGRKR) coordinates substrate. GTP is bound by residues Arg-304, 330–332 (KLD), and 412–414 (GTG).

The protein belongs to the adenylosuccinate synthetase family. In terms of assembly, homodimer. Mg(2+) serves as cofactor.

It localises to the cytoplasm. The enzyme catalyses IMP + L-aspartate + GTP = N(6)-(1,2-dicarboxyethyl)-AMP + GDP + phosphate + 2 H(+). The protein operates within purine metabolism; AMP biosynthesis via de novo pathway; AMP from IMP: step 1/2. In terms of biological role, plays an important role in the de novo pathway of purine nucleotide biosynthesis. Catalyzes the first committed step in the biosynthesis of AMP from IMP. The chain is Adenylosuccinate synthetase from Tropheryma whipplei (strain TW08/27) (Whipple's bacillus).